The primary structure comprises 581 residues: Multidrug resistance-like ATP-binding protein MdlA (581 aa).

An ABC transmembrane type-1 domain is found at 18–303 (YLGSIILLII…LAWMFNIVER (286 aa)). 6 helical membrane-spanning segments follow: residues 23 to 43 (ILLI…GILI), 53 to 73 (GFEI…VYIL), 127 to 149 (VVFA…ISVL), 153 to 175 (ITQI…AILI), 247 to 267 (VIYL…GWLV), and 280 to 300 (FIMY…MFNI). The region spanning 337–571 (INIDMFFYPK…KNWYKSMYDH (235 aa)) is the ABC transporter domain. 369–376 (GPTGAGKS) contacts ATP.

It belongs to the ABC transporter superfamily. Drug exporter-2 (TC 3.A.1.117) family.

It localises to the cell membrane. The enzyme catalyses ATP + H2O + xenobioticSide 1 = ADP + phosphate + xenobioticSide 2.. This chain is Multidrug resistance-like ATP-binding protein MdlA (mdlA), found in Buchnera aphidicola subsp. Schizaphis graminum (strain Sg).